Reading from the N-terminus, the 647-residue chain is Carboxypeptidase Z (647 aa).

The first 18 residues, 1–18 (MVPSLLLLLTGLFRATEP), serve as a signal peptide directing secretion. One can recognise an FZ domain in the interval 35-157 (AQKAKCVDIS…AGEEEGCFDP (123 aa)). 5 cysteine pairs are disulfide-bonded: Cys-40/Cys-106, Cys-48/Cys-99, Cys-90/Cys-126, Cys-115/Cys-154, and Cys-119/Cys-143. One can recognise a Peptidase M14 domain in the interval 183–499 (KHHSYSQMVS…DALLNYMEMV (317 aa)). Residues His-245 and Glu-248 each coordinate Zn(2+). N-linked (GlcNAc...) asparagine glycosylation occurs at Asn-278. His-377 contributes to the Zn(2+) binding site. Residue Glu-469 is the Proton donor/acceptor of the active site.

This sequence belongs to the peptidase M14 family. In terms of assembly, interacts with WNT4 vie its FZ domain. Requires Zn(2+) as cofactor. As to expression, in the early embryo it is initially expressed throughout the somites and subsequently becomes restricted to the sclerotome. Expressed in somites, paraxial head mesoderm and apical ectodermal ridge.

It is found in the secreted. The protein resides in the extracellular space. The protein localises to the extracellular matrix. Inhibited by 2-mercaptomethyl-3-guanidinoethylthiopropanoic acid (MGTA) and guanidinoethylmercaptosuccinic acid (GEMSA). Inhibited by chelating agents such as EDTA and EGTA. In terms of biological role, cleaves substrates with C-terminal arginine residues. Modulates the Wnt signaling pathway, probably by cleaving some undefined protein. Regulates the development of skeletal elements during development, probably by activating WNT4. This chain is Carboxypeptidase Z (CPZ), found in Gallus gallus (Chicken).